The primary structure comprises 295 residues: Spermatogenesis-associated protein 4 (295 aa).

The interval 1-34 (MAAAGQAEECLPLPAAESSKTSLPTPPAVPAGKK) is disordered. Residues 48-154 (SRLSRSVLRW…QEIYTLLTHQ (107 aa)) enclose the Calponin-homology (CH) domain. Residues 251 to 295 (KRRYKSRGSKEKAAQPLSKSDNDGNARKEIHVKQSGNPCENTENL) form a disordered region. Basic and acidic residues predominate over residues 270-282 (SDNDGNARKEIHV). The span at 284 to 295 (QSGNPCENTENL) shows a compositional bias: polar residues.

As to expression, testis.

It is found in the nucleus. In terms of biological role, may play a role in apoptosis regulation. The polypeptide is Spermatogenesis-associated protein 4 (Spata4) (Mus musculus (Mouse)).